The chain runs to 126 residues: Small ribosomal subunit protein uS13 (126 aa).

The tract at residues 95-126 (GLPVRGQRTRTNARTRKGPRKTVAGKKKAPRK) is disordered.

Belongs to the universal ribosomal protein uS13 family. As to quaternary structure, part of the 30S ribosomal subunit. Forms a loose heterodimer with protein S19. Forms two bridges to the 50S subunit in the 70S ribosome.

Its function is as follows. Located at the top of the head of the 30S subunit, it contacts several helices of the 16S rRNA. In the 70S ribosome it contacts the 23S rRNA (bridge B1a) and protein L5 of the 50S subunit (bridge B1b), connecting the 2 subunits; these bridges are implicated in subunit movement. Contacts the tRNAs in the A and P-sites. The chain is Small ribosomal subunit protein uS13 (rpsM) from Thermus thermophilus (strain ATCC BAA-163 / DSM 7039 / HB27).